The sequence spans 316 residues: Arabinooligosaccharides transport system permease protein AraP (316 aa).

Helical transmembrane passes span 32–52, 94–114, 128–148, 178–198, 224–244, 254–274, and 283–303; these read VVPY…SFYP, TYMI…AVLL, ALFL…RLMF, MFLM…LYFL, FYVT…ISVI, FVFW…GYLY, and MGFG…ISIT. Residues 89-304 enclose the ABC transmembrane type-1 domain; sequence LQNTTTYMIL…LIIFVISITQ (216 aa).

Belongs to the binding-protein-dependent transport system permease family. MalFG subfamily. As to quaternary structure, the complex is composed of two ATP-binding proteins (MsmX), two transmembrane proteins (AraP and AraQ) and a solute-binding protein (AraN).

It is found in the cell membrane. Functionally, part of the ABC transporter complex AraNPQ involved in the uptake of arabinooligosaccharides. Responsible for the translocation of the substrate across the membrane. This is Arabinooligosaccharides transport system permease protein AraP (araP) from Halalkalibacterium halodurans (strain ATCC BAA-125 / DSM 18197 / FERM 7344 / JCM 9153 / C-125) (Bacillus halodurans).